The following is an 89-amino-acid chain: Small ribosomal subunit protein uS19 (89 aa).

It belongs to the universal ribosomal protein uS19 family.

In terms of biological role, protein S19 forms a complex with S13 that binds strongly to the 16S ribosomal RNA. This chain is Small ribosomal subunit protein uS19, found in Phocaeicola vulgatus (strain ATCC 8482 / DSM 1447 / JCM 5826 / CCUG 4940 / NBRC 14291 / NCTC 11154) (Bacteroides vulgatus).